The sequence spans 858 residues: Leucine--tRNA ligase (858 aa).

A 'HIGH' region motif is present at residues 42-52 (PYPSGNLHMGH). The span at 584–594 (NPNRSDSSRYI) shows a compositional bias: polar residues. The disordered stretch occupies residues 584–611 (NPNRSDSSRYIPSNLVDPNDPKDPETGE). The 'KMSKS' region signature appears at 619 to 623 (TMSKS). Lys622 lines the ATP pocket.

The protein belongs to the class-I aminoacyl-tRNA synthetase family.

The protein localises to the cytoplasm. The catalysed reaction is tRNA(Leu) + L-leucine + ATP = L-leucyl-tRNA(Leu) + AMP + diphosphate. In Cyanothece sp. (strain PCC 7425 / ATCC 29141), this protein is Leucine--tRNA ligase.